The chain runs to 423 residues: Adenylosuccinate synthetase (423 aa).

GTP contacts are provided by residues 12–18 (GDEGKGK) and 40–42 (GHT). Aspartate 13 functions as the Proton acceptor in the catalytic mechanism. Mg(2+) is bound by residues aspartate 13 and glycine 40. IMP-binding positions include 13–16 (DEGK), 38–41 (NAGH), threonine 129, arginine 143, glutamine 221, threonine 236, and arginine 300. Residue histidine 41 is the Proton donor of the active site. Residue 296–302 (SVTGRKR) participates in substrate binding. GTP is bound by residues arginine 302, 328-330 (KSD), and 408-410 (SVG).

It belongs to the adenylosuccinate synthetase family. Homodimer. It depends on Mg(2+) as a cofactor.

The protein resides in the cytoplasm. It catalyses the reaction IMP + L-aspartate + GTP = N(6)-(1,2-dicarboxyethyl)-AMP + GDP + phosphate + 2 H(+). Its pathway is purine metabolism; AMP biosynthesis via de novo pathway; AMP from IMP: step 1/2. Plays an important role in the de novo pathway of purine nucleotide biosynthesis. Catalyzes the first committed step in the biosynthesis of AMP from IMP. This is Adenylosuccinate synthetase from Bacteroides fragilis (strain ATCC 25285 / DSM 2151 / CCUG 4856 / JCM 11019 / LMG 10263 / NCTC 9343 / Onslow / VPI 2553 / EN-2).